The primary structure comprises 76 residues: Alpha/kappa-conotoxin pl14a (76 aa).

The signal sequence occupies residues 1-24; sequence MPSVRSVTCCCLLWMMFSVQLVTP. Positions 25 to 39 are excised as a propeptide; that stretch reads GSPGTAQLSGHRTAR. Intrachain disulfides connect cysteine 46/cysteine 61 and cysteine 50/cysteine 63. Position 64 is an arginine amide (arginine 64). The propeptide occupies 65-76; sequence GKRDAVSSSMAV.

The protein belongs to the conotoxin J superfamily. As to expression, expressed by the venom duct.

It localises to the secreted. In terms of biological role, highly inhibits both nicotinic acetylcholine receptors (neuronal (IC(50)=8.7 uM for alpha-3/beta-4) and muscular (IC(50)=0.54 uM for alpha-1-beta-1-epsilon-delta (CHRNA1-CHRNB1-CHRND-CHRNE)) subtypes) and the voltage-gated potassium channel Kv1.6/KCNA6 subtype (IC(50)=1.59 uM). The chain is Alpha/kappa-conotoxin pl14a from Conus planorbis (Planorbis cone).